The primary structure comprises 157 residues: Ribosomal RNA large subunit methyltransferase H (157 aa).

S-adenosyl-L-methionine-binding positions include Leu-73, Gly-105, and 124–129 (LSKMTF).

It belongs to the RNA methyltransferase RlmH family. Homodimer.

Its subcellular location is the cytoplasm. The enzyme catalyses pseudouridine(1915) in 23S rRNA + S-adenosyl-L-methionine = N(3)-methylpseudouridine(1915) in 23S rRNA + S-adenosyl-L-homocysteine + H(+). Specifically methylates the pseudouridine at position 1915 (m3Psi1915) in 23S rRNA. The chain is Ribosomal RNA large subunit methyltransferase H from Phocaeicola vulgatus (strain ATCC 8482 / DSM 1447 / JCM 5826 / CCUG 4940 / NBRC 14291 / NCTC 11154) (Bacteroides vulgatus).